Reading from the N-terminus, the 224-residue chain is Peptidyl-tRNA hydrolase (224 aa).

A tRNA-binding site is contributed by tyrosine 27. Residue histidine 32 is the Proton acceptor of the active site. Positions 78, 80, and 126 each coordinate tRNA. The span at 203–215 shows a compositional bias: low complexity; the sequence is LSGPSSDLDGSNP. A disordered region spans residues 203–224; it reads LSGPSSDLDGSNPAPGHGEASS.

It belongs to the PTH family. In terms of assembly, monomer.

It localises to the cytoplasm. It carries out the reaction an N-acyl-L-alpha-aminoacyl-tRNA + H2O = an N-acyl-L-amino acid + a tRNA + H(+). Hydrolyzes ribosome-free peptidyl-tRNAs (with 1 or more amino acids incorporated), which drop off the ribosome during protein synthesis, or as a result of ribosome stalling. Its function is as follows. Catalyzes the release of premature peptidyl moieties from peptidyl-tRNA molecules trapped in stalled 50S ribosomal subunits, and thus maintains levels of free tRNAs and 50S ribosomes. This Synechococcus sp. (strain JA-2-3B'a(2-13)) (Cyanobacteria bacterium Yellowstone B-Prime) protein is Peptidyl-tRNA hydrolase.